Here is a 479-residue protein sequence, read N- to C-terminus: tRNA-2-methylthio-N(6)-dimethylallyladenosine synthase (479 aa).

The region spanning 6 to 122 is the MTTase N-terminal domain; the sequence is KTVYIKTVGC…IPDMLTKVTS (117 aa). Residues Cys-15, Cys-51, Cys-85, Cys-172, Cys-176, and Cys-179 each coordinate [4Fe-4S] cluster. Positions 158 to 390 constitute a Radical SAM core domain; sequence RPTPFQAYLR…LAVQDRISKE (233 aa). In terms of domain architecture, TRAM spans 393–464; it reads QKLIGDTVEV…SHTLIGRVKT (72 aa).

It belongs to the methylthiotransferase family. MiaB subfamily. Monomer. The cofactor is [4Fe-4S] cluster.

It is found in the cytoplasm. The enzyme catalyses N(6)-dimethylallyladenosine(37) in tRNA + (sulfur carrier)-SH + AH2 + 2 S-adenosyl-L-methionine = 2-methylsulfanyl-N(6)-dimethylallyladenosine(37) in tRNA + (sulfur carrier)-H + 5'-deoxyadenosine + L-methionine + A + S-adenosyl-L-homocysteine + 2 H(+). Catalyzes the methylthiolation of N6-(dimethylallyl)adenosine (i(6)A), leading to the formation of 2-methylthio-N6-(dimethylallyl)adenosine (ms(2)i(6)A) at position 37 in tRNAs that read codons beginning with uridine. This is tRNA-2-methylthio-N(6)-dimethylallyladenosine synthase from Rhodopirellula baltica (strain DSM 10527 / NCIMB 13988 / SH1).